The sequence spans 160 residues: Cytochrome b6-f complex subunit 4 (160 aa).

Helical transmembrane passes span L36–V56, L95–E115, and T131–I151.

This sequence belongs to the cytochrome b family. PetD subfamily. The 4 large subunits of the cytochrome b6-f complex are cytochrome b6, subunit IV (17 kDa polypeptide, petD), cytochrome f and the Rieske protein, while the 4 small subunits are petG, petL, petM and petN. The complex functions as a dimer.

The protein localises to the plastid. Its subcellular location is the chloroplast thylakoid membrane. Functionally, component of the cytochrome b6-f complex, which mediates electron transfer between photosystem II (PSII) and photosystem I (PSI), cyclic electron flow around PSI, and state transitions. This chain is Cytochrome b6-f complex subunit 4, found in Daucus carota (Wild carrot).